The sequence spans 166 residues: Small ribosomal subunit protein uS4 (166 aa).

Residues 103 to 165 (RRLQTVVYKK…PTSPYFKKAQ (63 aa)) enclose the S4 RNA-binding domain.

It belongs to the universal ribosomal protein uS4 family. In terms of assembly, part of the 30S ribosomal subunit. Contacts protein S5. The interaction surface between S4 and S5 is involved in control of translational fidelity.

In terms of biological role, one of the primary rRNA binding proteins, it binds directly to 16S rRNA where it nucleates assembly of the body of the 30S subunit. Its function is as follows. With S5 and S12 plays an important role in translational accuracy. This is Small ribosomal subunit protein uS4 from Ignicoccus hospitalis (strain KIN4/I / DSM 18386 / JCM 14125).